The chain runs to 734 residues: Translation initiation factor IF-2 (734 aa).

The interval 39 to 110 is disordered; that stretch reads SKFAPRSSFT…TGKPETKKRE (72 aa). Basic and acidic residues predominate over residues 82-110; that stretch reads DYEKRKLAEQRATRRLKGDTGKPETKKRE. The tr-type G domain maps to 238–405; that stretch reads NRPPIVTVMG…SIVLQAEILD (168 aa). The G1 stretch occupies residues 247–254; it reads GHVDHGKT. 247-254 is a GTP binding site; the sequence is GHVDHGKT. Residues 272–276 form a G2 region; it reads GITQH. The segment at 293–296 is G3; it reads DTPG. GTP contacts are provided by residues 293–297 and 347–350; these read DTPGH and NKCD. The G4 stretch occupies residues 347 to 350; that stretch reads NKCD. Residues 383-385 form a G5 region; the sequence is SAK.

Belongs to the TRAFAC class translation factor GTPase superfamily. Classic translation factor GTPase family. IF-2 subfamily.

Its subcellular location is the cytoplasm. One of the essential components for the initiation of protein synthesis. Protects formylmethionyl-tRNA from spontaneous hydrolysis and promotes its binding to the 30S ribosomal subunits. Also involved in the hydrolysis of GTP during the formation of the 70S ribosomal complex. This is Translation initiation factor IF-2 from Pelagibacter ubique (strain HTCC1062).